The primary structure comprises 291 residues: Sesquiterpene cyclase astC (291 aa).

This sequence belongs to the HAD-like hydrolase superfamily.

It catalyses the reaction (2E,6E)-farnesyl diphosphate = (S,S)-drim-8-en-11-yl diphosphate. It participates in secondary metabolite biosynthesis; terpenoid biosynthesis. Its function is as follows. Sesquiterpene cyclase; part of the gene cluster that mediates the biosynthesis of astellolides, drimane-type sesquiterpene esters that show antimicrobial, anti-inflammatory, and anti-tumor activities. The first step in astellolide biosynthesis is performed by the sesquiterpene cyclase astC that catalyzes the formation of drimanyl pyrophosphate from farnesyl pyrophosphate. Drimanyl pyrophosphate is then dephosphorylated by the sesquiterpene phosphatase astI to produce drimanyl monophosphate which is further dephosphorylated to drim-8-ene-11-ol by atsK. Drim-8-ene-11-ol is converted to confertifolin, probably by the cytochrome P450 monooxygenase astD and/or the dehydrogenase astE. The cytochrome P450 monooxygenases astB, astF and astJ then hydroxylate confertifolin at C6, C14, or C15 to form trihydroxy confertifolin. The nonribosomal peptide synthetase astA catalyzes ester bond formation between trihydroxy contifolin and benzoic acid (BA) or 4-hydroxy benzoic acid (4HBA), leading to the formation of dideacetyl astellolides A and B, respectively. Finally, the O-acetyltransferase astG converts dideacetyl astellolides A and B into deacetyl astellolides A and B. In Aspergillus oryzae (strain ATCC 42149 / RIB 40) (Yellow koji mold), this protein is Sesquiterpene cyclase astC.